The primary structure comprises 433 residues: Transcriptional enhancer factor TEF-5 (433 aa).

Over residues 1 to 12 the composition is skewed to polar residues; the sequence is MASNSWNASSSP. Residues 1 to 35 are disordered; the sequence is MASNSWNASSSPGEGREDGQDGMDKSLDNDAEGVW. Residues 14–28 are compositionally biased toward basic and acidic residues; that stretch reads EGREDGQDGMDKSLD. The TEA DNA-binding region spans 28–104; sequence DNDAEGVWSP…QVLARREISG (77 aa). The interval 171-433 is transcriptional activation; sequence GPSQDIKPFA…QHHVYKLVKD (263 aa).

In terms of tissue distribution, high levels in cardiac muscle, low in skeletal muscle. Intermediate levels in gizzard and lung, low levels in kidney.

Its subcellular location is the nucleus. Its function is as follows. Transcription factor which plays a key role in the Hippo signaling pathway, a pathway involved in organ size control and tumor suppression by restricting proliferation and promoting apoptosis. The core of this pathway is composed of a kinase cascade wherein MST1/MST2, in complex with its regulatory protein SAV1, phosphorylates and activates LATS1/2 in complex with its regulatory protein MOB1, which in turn phosphorylates and inactivates YAP1 oncoprotein and WWTR1/TAZ. The protein is Transcriptional enhancer factor TEF-5 (TEAD3) of Gallus gallus (Chicken).